We begin with the raw amino-acid sequence, 241 residues long: tRNA pseudouridine synthase B (241 aa).

Asp-52 functions as the Nucleophile in the catalytic mechanism.

This sequence belongs to the pseudouridine synthase TruB family. Type 1 subfamily.

It catalyses the reaction uridine(55) in tRNA = pseudouridine(55) in tRNA. Functionally, responsible for synthesis of pseudouridine from uracil-55 in the psi GC loop of transfer RNAs. This is tRNA pseudouridine synthase B from Chloroherpeton thalassium (strain ATCC 35110 / GB-78).